The primary structure comprises 225 residues: Uridine kinase (225 aa).

12-19 contributes to the ATP binding site; that stretch reads GGTGAGKT.

It belongs to the uridine kinase family.

It is found in the cytoplasm. The catalysed reaction is uridine + ATP = UMP + ADP + H(+). The enzyme catalyses cytidine + ATP = CMP + ADP + H(+). Its pathway is pyrimidine metabolism; CTP biosynthesis via salvage pathway; CTP from cytidine: step 1/3. It functions in the pathway pyrimidine metabolism; UMP biosynthesis via salvage pathway; UMP from uridine: step 1/1. In Halobacterium salinarum (strain ATCC 700922 / JCM 11081 / NRC-1) (Halobacterium halobium), this protein is Uridine kinase.